We begin with the raw amino-acid sequence, 894 residues long: Protein SEY1 homolog (894 aa).

Low complexity-rich tracts occupy residues 1 to 10 (MSEEITTNQT) and 36 to 48 (VQEQQEQQQQEQQ). Positions 1–97 (MSEEITTNQT…QKQQTQEQEH (97 aa)) are disordered. The Cytoplasmic segment spans residues 1-800 (MSEEITTNQT…EQNRLTSGGG (800 aa)). The stretch at 21-60 (RLSNENIKQEDEEQQVQEQQEQQQQEQQEQIDDQDTQQQE) forms a coiled coil. The span at 49–65 (EQIDDQDTQQQEDEFVV) shows a compositional bias: acidic residues. Residues 78 to 93 (TPTLQETPQQQKQQTQ) are compositionally biased toward low complexity. The GB1/RHD3-type G domain occupies 138–361 (GFDYSVISIL…ADSFIPKRKY (224 aa)). Position 148–155 (148–155 (GPQSSGKS)) interacts with GTP. The helical transmembrane segment at 801–821 (VPGYMIILLCVLGFNEFISII) threads the bilayer. Residues 822–824 (SSP) lie on the Lumenal side of the membrane. Residues 825–845 (LLLLLTILLGGVGFVLFKLGL) traverse the membrane as a helical segment. Topologically, residues 846 to 894 (AGPFIDYSSQILVHFISKVKDIVLHVEQLQEQNHNNNNNNNNTPKQKRE) are cytoplasmic.

Belongs to the TRAFAC class dynamin-like GTPase superfamily. GB1/RHD3 GTPase family. RHD3 subfamily.

The protein localises to the endoplasmic reticulum membrane. Functionally, probable GTP-binding protein that may be involved in cell development. The chain is Protein SEY1 homolog from Dictyostelium discoideum (Social amoeba).